The chain runs to 384 residues: Mannitol-1-phosphate 5-dehydrogenase (384 aa).

An NAD(+)-binding site is contributed by 3-14 (AVHFGAGNIGRG).

It belongs to the mannitol dehydrogenase family.

The enzyme catalyses D-mannitol 1-phosphate + NAD(+) = beta-D-fructose 6-phosphate + NADH + H(+). This Arthrobacter sp. (strain FB24) protein is Mannitol-1-phosphate 5-dehydrogenase.